Consider the following 940-residue polypeptide: DNA gyrase subunit A (940 aa).

The disordered stretch occupies residues 1-22 (MSDHTNPPSAPPDDDPNGGSLL). The Topo IIA-type catalytic domain occupies 48 to 538 (LPDARDGLKP…SLADQDDESL (491 aa)). Y136 functions as the O-(5'-phospho-DNA)-tyrosine intermediate in the catalytic mechanism. A GyrA-box motif is present at residues 565-571 (QHRGGRG). A compositionally biased stretch (acidic residues) spans 914-924 (ESVDDNGDDAD). The segment at 914 to 940 (ESVDDNGDDADSVAPAAPDGQVTDSDD) is disordered.

Belongs to the type II topoisomerase GyrA/ParC subunit family. As to quaternary structure, heterotetramer, composed of two GyrA and two GyrB chains. In the heterotetramer, GyrA contains the active site tyrosine that forms a transient covalent intermediate with DNA, while GyrB binds cofactors and catalyzes ATP hydrolysis.

The protein resides in the cytoplasm. The catalysed reaction is ATP-dependent breakage, passage and rejoining of double-stranded DNA.. Its function is as follows. A type II topoisomerase that negatively supercoils closed circular double-stranded (ds) DNA in an ATP-dependent manner to modulate DNA topology and maintain chromosomes in an underwound state. Negative supercoiling favors strand separation, and DNA replication, transcription, recombination and repair, all of which involve strand separation. Also able to catalyze the interconversion of other topological isomers of dsDNA rings, including catenanes and knotted rings. Type II topoisomerases break and join 2 DNA strands simultaneously in an ATP-dependent manner. This Granulibacter bethesdensis (strain ATCC BAA-1260 / CGDNIH1) protein is DNA gyrase subunit A.